The chain runs to 273 residues: Putative pyruvate, phosphate dikinase regulatory protein (273 aa).

ADP is bound at residue 153 to 160 (GVSRTSKT).

The protein belongs to the pyruvate, phosphate/water dikinase regulatory protein family. PDRP subfamily.

The enzyme catalyses N(tele)-phospho-L-histidyl/L-threonyl-[pyruvate, phosphate dikinase] + ADP = N(tele)-phospho-L-histidyl/O-phospho-L-threonyl-[pyruvate, phosphate dikinase] + AMP + H(+). It catalyses the reaction N(tele)-phospho-L-histidyl/O-phospho-L-threonyl-[pyruvate, phosphate dikinase] + phosphate + H(+) = N(tele)-phospho-L-histidyl/L-threonyl-[pyruvate, phosphate dikinase] + diphosphate. Its function is as follows. Bifunctional serine/threonine kinase and phosphorylase involved in the regulation of the pyruvate, phosphate dikinase (PPDK) by catalyzing its phosphorylation/dephosphorylation. This chain is Putative pyruvate, phosphate dikinase regulatory protein, found in Rhizobium meliloti (strain 1021) (Ensifer meliloti).